The sequence spans 210 residues: Probable GTP-binding protein EngB (210 aa).

The 175-residue stretch at 30 to 204 (QGYEVAFAGR…YRVLADWMEL (175 aa)) folds into the EngB-type G domain. GTP contacts are provided by residues 38 to 45 (GRSNAGKS), 64 to 68 (GRTQL), 82 to 85 (DLPG), 149 to 152 (TKAD), and 182 to 185 (LFSA). Positions 45 and 66 each coordinate Mg(2+).

The protein belongs to the TRAFAC class TrmE-Era-EngA-EngB-Septin-like GTPase superfamily. EngB GTPase family. Requires Mg(2+) as cofactor.

Functionally, necessary for normal cell division and for the maintenance of normal septation. In Pseudomonas entomophila (strain L48), this protein is Probable GTP-binding protein EngB.